We begin with the raw amino-acid sequence, 77 residues long: Putative defensin-like protein 60 (77 aa).

Positions 1–25 are cleaved as a signal peptide; sequence MKMNITKSYVILFLVVVMTNSLSNS. 4 disulfides stabilise this stretch: Cys-41-Cys-75, Cys-45-Cys-68, Cys-54-Cys-73, and Cys-58-Cys-74.

This sequence belongs to the DEFL family.

The protein localises to the secreted. The chain is Putative defensin-like protein 60 from Arabidopsis thaliana (Mouse-ear cress).